Reading from the N-terminus, the 504-residue chain is MNVFFMFSLLFLAALGSCANDRNPLEECFRETDYEEFLEIARNGLKATSNPKHVVVVGAGMSGLSAAYVLSGAGHQVTVLEASERAGGRVRTYRNDKEDWYANLGPMRLPEKHRIVREYIRKFGLQLNEFSQENDNAWYFIKNIRKRVGEVKKDPGVLKYPVKPSEEGKSAGQLYEESLGKVVEELKRTNCSYILNKYDTYSTKEYLLKEGNLSPGAVDMIGDLMNEDSGYYVSFPESLRHDDIFAYEKRFDEIVGGMDKLPTSMYRAIEEKVHLNAQVIKIQKNAEKVTVVYQTPAKEMASVTADYVIVCTTSRATRRIKFEPPLPPKKAHALRSVHYRSGTKIFLTCTKKFWEDEGIHGGKSTTDLPSRFIYYPNHNFTSGVGVIIAYGIGDDANFFQALDFKDCADIVINDLSLIHQLPREEIQTFCYPSMIQKWSLDKYAMGGITTFTPYQFQHFSESLTASVDRIYFAGEHTAEAHGWIDSTIKSGLRAARDVNRASEQ.

Residues 1 to 18 (MNVFFMFSLLFLAALGSC) form the signal peptide. A disulfide bridge links cysteine 28 with cysteine 191. FAD is bound by residues 61–62 (MS), 81–82 (EA), arginine 89, and 105–108 (GPMR). Arginine 108 provides a ligand contact to substrate. Asparagine 190 carries an N-linked (GlcNAc...) asparagine glycan. Histidine 241 lines the substrate pocket. Residue valine 279 participates in FAD binding. A disulfide bond links cysteine 349 and cysteine 430. N-linked (GlcNAc...) asparagine glycosylation occurs at asparagine 379. Tyrosine 390 is a binding site for substrate. FAD is bound by residues glutamate 475 and 482 to 487 (GWIDST). 482-483 (GW) contributes to the substrate binding site.

This sequence belongs to the flavin monoamine oxidase family. FIG1 subfamily. As to quaternary structure, homodimer; non-covalently linked. FAD serves as cofactor. In terms of tissue distribution, expressed by the venom gland.

It is found in the secreted. The enzyme catalyses an L-alpha-amino acid + O2 + H2O = a 2-oxocarboxylate + H2O2 + NH4(+). It catalyses the reaction L-leucine + O2 + H2O = 4-methyl-2-oxopentanoate + H2O2 + NH4(+). Its function is as follows. Catalyzes an oxidative deamination of predominantly hydrophobic and aromatic L-amino acids, thus producing hydrogen peroxide that may contribute to the diverse toxic effects of this enzyme. Shows activity on L-Leu. Exhibits diverse biological activities, such as hemorrhage, hemolysis, edema, antibacterial and antiparasitic activities, as well as regulation of platelet aggregation. Its effect on platelets is controversial, since it either induces aggregation or inhibits agonist-induced aggregation. These different effects are probably due to different experimental conditions. This protein induces apoptosis of cultured HeLa cells. This Gloydius halys (Chinese water mocassin) protein is L-amino-acid oxidase.